Reading from the N-terminus, the 447-residue chain is uncharacterized protein (447 aa).

The next 3 membrane-spanning stretches (helical) occupy residues 28–48 (IVIV…YPAV), 241–261 (IDAS…YYAI), and 397–417 (PFVL…LSIF).

The protein resides in the membrane. This is an uncharacterized protein from Schizosaccharomyces pombe (strain 972 / ATCC 24843) (Fission yeast).